Here is a 664-residue protein sequence, read N- to C-terminus: DNA ligase (664 aa).

Residues 31-35 (DYEFD), 80-81 (SL), and Glu-110 contribute to the NAD(+) site. The active-site N6-AMP-lysine intermediate is Lys-112. Residues Arg-133 and Glu-169 each contribute to the NAD(+) site. The BRCT 1 domain maps to 237 to 257 (LEKARKWGFKVPAESELKDSI). The NAD(+) site is built by Lys-284 and Lys-308. Residues Cys-402, Cys-405, Cys-420, and Cys-426 each coordinate Zn(2+). One can recognise a BRCT 2 domain in the interval 586–664 (NQTNILEGNT…SEEDFLKMLE (79 aa)).

The protein belongs to the NAD-dependent DNA ligase family. LigA subfamily. It depends on Mg(2+) as a cofactor. The cofactor is Mn(2+).

The catalysed reaction is NAD(+) + (deoxyribonucleotide)n-3'-hydroxyl + 5'-phospho-(deoxyribonucleotide)m = (deoxyribonucleotide)n+m + AMP + beta-nicotinamide D-nucleotide.. Its function is as follows. DNA ligase that catalyzes the formation of phosphodiester linkages between 5'-phosphoryl and 3'-hydroxyl groups in double-stranded DNA using NAD as a coenzyme and as the energy source for the reaction. It is essential for DNA replication and repair of damaged DNA. This is DNA ligase from Christiangramia forsetii (strain DSM 17595 / CGMCC 1.15422 / KT0803) (Gramella forsetii).